The sequence spans 417 residues: Putative competence-damage inducible protein (417 aa).

The protein belongs to the CinA family.

This chain is Putative competence-damage inducible protein, found in Leuconostoc citreum (strain KM20).